Here is a 107-residue protein sequence, read N- to C-terminus: UPF0060 membrane protein ZMO1566 (107 aa).

4 helical membrane-spanning segments follow: residues 4 to 24 (LLYI…WAWI), 29 to 49 (SPLW…LLTF), 55 to 75 (AGKA…LWSW), and 84 to 104 (HWDL…LWMP).

It belongs to the UPF0060 family.

It is found in the cell inner membrane. The chain is UPF0060 membrane protein ZMO1566 from Zymomonas mobilis subsp. mobilis (strain ATCC 31821 / ZM4 / CP4).